Reading from the N-terminus, the 476-residue chain is Inosine-5'-monophosphate dehydrogenase (476 aa).

2 consecutive CBS domains span residues 92 to 150 and 151 to 207; these read MIEN…IADV and MTKD…PNAS. NAD(+) is bound by residues aspartate 244 and 294–296; that span reads GVG. 2 residues coordinate K(+): glycine 296 and glycine 298. An IMP-binding site is contributed by serine 299. Cysteine 301 contacts K(+). Cysteine 301 acts as the Thioimidate intermediate in catalysis. Residues 334–336, 357–358, 381–385, and glutamate 413 contribute to the IMP site; these read DGG, GS, and YRGMA. The K(+) site is built by glutamate 467 and serine 468.

Belongs to the IMPDH/GMPR family. Homotetramer. It depends on K(+) as a cofactor.

The catalysed reaction is IMP + NAD(+) + H2O = XMP + NADH + H(+). It functions in the pathway purine metabolism; XMP biosynthesis via de novo pathway; XMP from IMP: step 1/1. With respect to regulation, mycophenolic acid (MPA) is a non-competitive inhibitor that prevents formation of the closed enzyme conformation by binding to the same site as the amobile flap. In contrast, mizoribine monophosphate (MZP) is a competitive inhibitor that induces the closed conformation. MPA is a potent inhibitor of mammalian IMPDHs but a poor inhibitor of the bacterial enzymes. MZP is a more potent inhibitor of bacterial IMPDH. Functionally, catalyzes the conversion of inosine 5'-phosphate (IMP) to xanthosine 5'-phosphate (XMP), the first committed and rate-limiting step in the de novo synthesis of guanine nucleotides, and therefore plays an important role in the regulation of cell growth. This Nitrosopumilus maritimus (strain SCM1) protein is Inosine-5'-monophosphate dehydrogenase.